We begin with the raw amino-acid sequence, 89 residues long: Islet amyloid polypeptide (89 aa).

The N-terminal stretch at 1-22 (MCLLKLPVVLIVLLVALHHLKA) is a signal peptide. Residues 23 to 31 (TPIESNQVE) constitute a propeptide that is removed on maturation. Cys-35 and Cys-40 are joined by a disulfide. At Tyr-70 the chain carries Tyrosine amide. The propeptide occupies 74–89 (STVDILNREPLNYLPF).

The protein belongs to the calcitonin family. In terms of assembly, can form homodimers. Interacts with IDE and INS. Interaction with INS inhibits homodimerization and fibril formation.

The protein resides in the secreted. Amylin/IAPP is a glucoregulatory peptide hormone that plays an important role in the regulation of energy homeostasis. Selectively inhibits insulin-stimulated glucose utilization and glycogen deposition in muscle, while not affecting adipocyte glucose metabolism. IAPP function is mediated by the CALCR-RAMPs (AMYRs) receptor complexes. Amylin can also bind CALCR receptor in the absence of RAMPs, although it is more selective for AMYRs. This chain is Islet amyloid polypeptide (IAPP), found in Felis catus (Cat).